The primary structure comprises 589 residues: Cell fusion protein aff-1 (589 aa).

An N-terminal signal peptide occupies residues 1 to 20 (MRLWQWSIAVAICLVMVTEA). Over 21 to 537 (RLRRHHRKRR…MAHGGDFTEW (517 aa)) the chain is Extracellular. Residues asparagine 58, asparagine 138, asparagine 205, asparagine 335, asparagine 382, asparagine 392, and asparagine 408 are each glycosylated (N-linked (GlcNAc...) asparagine). Residues 538 to 558 (LKIGIHIVIAVGLLLLLILLF) traverse the membrane as a helical segment. At 559-589 (TKCLVPLACCSLSIPFKNRNKKKKKKNSSDY) the chain is on the cytoplasmic side.

This sequence belongs to the EFF/AFF cell fusogen family. Expressed in amphid sheath cells.

It localises to the cell membrane. The protein localises to the apical cell membrane. Functionally, required for cell fusion events during development including the fusion of anchor cells (AC), vulval A and vulval D rings, and late epidermal seam cells. Required for amphid sheath cell fusion induced by entry into dauer stage. In Caenorhabditis elegans, this protein is Cell fusion protein aff-1.